The chain runs to 1284 residues: Zinc finger protein 423 (1284 aa).

Disordered stretches follow at residues 1–64 (MHKK…MEDE) and 87–117 (AHRC…SPTQ). Positions 34–46 (CDQKTSRALEDRN) are enriched in basic and acidic residues. Ser47 and Ser50 each carry phosphoserine. A compositionally biased stretch (acidic residues) spans 54–64 (RNEDDEDMEDE). The C2H2-type 1; degenerate zinc-finger motif lies at 67 to 93 (YTCDHCQQDFESLADLTDHRAHRCPGD). Residues 102 to 117 (WVASSPSSKDVASPTQ) are compositionally biased toward polar residues. 7 C2H2-type zinc fingers span residues 138 to 160 (YPCQ…EQIH), 166 to 188 (FKCT…IKLH), 194 to 216 (YHCH…LKTH), 222 to 244 (FKCT…MQAH), 263 to 286 (FMCD…LTRH), 295 to 318 (LQCI…HQAH), and 323 to 345 (HKCP…LDSH). The interval 346-398 (RQPDSSNHSVSPDPVLGSVASMSSATPDSSASVERGSTPDSTLKPLRGQKKMR) is disordered. Residues 363-377 (SVASMSSATPDSSAS) are compositionally biased toward low complexity. The C2H2-type 9; degenerate zinc-finger motif lies at 409–433 (YSCPYCSKRDFNSLAVLEIHLKTIH). 3 C2H2-type zinc fingers span residues 441 to 464 (HTCQ…RKLH), 480 to 503 (FHCN…RVSH), and 517 to 540 (FFCN…QQAH). Residues 563–588 (YSCPYCTNSPIFGSILKLTKHIKENH) form a C2H2-type 13; atypical zinc finger. A disordered region spans residues 590–624 (NIPLAHSKKSKAEQSPVSSDVEVSSPKRQRLSASA). Residue Ser604 is modified to Phosphoserine. The span at 604–615 (SPVSSDVEVSSP) shows a compositional bias: low complexity. 7 C2H2-type zinc fingers span residues 632 to 654 (YPCN…LKLH), 662 to 684 (QACP…LTVH), 692 to 715 (YVCE…LDMH), 720 to 743 (YHCT…AVKH), 750 to 773 (YRCT…KHSH), 781 to 803 (HKCI…ITTH), and 807 to 830 (YNCK…REKH). The C2H2-type 21; degenerate zinc finger occupies 886-908 (YGCDICGAAYTMEVLLQNHRLRD). 3 C2H2-type zinc fingers span residues 930–952 (HKCN…LQTH), 959–981 (YMCP…KVTH), and 1020–1042 (FRCV…GTFH). Ser1054 carries the phosphoserine modification. The C2H2-type 25; degenerate zinc finger occupies 1064–1082 (YKCALCLKEFRSKQDLVKL). C2H2-type zinc fingers lie at residues 1120 to 1143 (LRCP…QVDH), 1168 to 1190 (YQCI…VANH), 1198 to 1220 (HECK…LIEH), 1229 to 1252 (FKCP…FAVH), and 1259 to 1282 (YDCS…MSQH). Residues 1136-1147 (ESHMQVDHRDLT) show a composition bias toward basic and acidic residues. The tract at residues 1136 to 1163 (ESHMQVDHRDLTPETSGPRKGTQTSPVP) is disordered.

This sequence belongs to the krueppel C2H2-type zinc-finger protein family. As to quaternary structure, homodimer. Interacts with EBF1. Interacts with SMAD1 and SMAD4. Interacts with PARP1. Interacts with CEP290. In terms of tissue distribution, expressed in brain, lung, skeletal muscle, heart, pancreas and kidney but not liver or placenta. Also expressed in aorta, ovary, pituitary, small intestine, fetal brain, fetal kidney and, within the adult brain, in the substantia nigra, medulla, amygdala, thalamus and cerebellum.

The protein localises to the nucleus. Functionally, transcription factor that can both act as an activator or a repressor depending on the context. Plays a central role in BMP signaling and olfactory neurogenesis. Associates with SMADs in response to BMP2 leading to activate transcription of BMP target genes. Acts as a transcriptional repressor via its interaction with EBF1, a transcription factor involved in terminal olfactory receptor neurons differentiation; this interaction preventing EBF1 to bind DNA and activate olfactory-specific genes. Involved in olfactory neurogenesis by participating in a developmental switch that regulates the transition from differentiation to maturation in olfactory receptor neurons. Controls proliferation and differentiation of neural precursors in cerebellar vermis formation. The chain is Zinc finger protein 423 (ZNF423) from Homo sapiens (Human).